A 472-amino-acid chain; its full sequence is WASH complex subunit 1 (472 aa).

The segment at 1–51 is required for WASH complex assembly; that stretch reads MPQNRSVESQAYSLPLILPDLRREEAIHQITDTLQHLQTVSNDIFSRILQR. Disordered stretches follow at residues 294–411 and 429–472; these read DRQD…GGDL and KVPA…DWES. The segment covering 301-334 has biased composition (pro residues); that stretch reads LPPPPPPPPPPPPPPPPEPSALSPPAPPPPPLSI. The interval 352–472 is VCA; the sequence is QGAPKEVVNP…GDGDEDDWES (121 aa). Residues 364–386 form the WH2 domain; the sequence is GRASLLESIRQAGGIGKANLRNV. The span at 385–400 shows a compositional bias: basic and acidic residues; sequence NVKEKKLEKKKMKEQE.

The protein belongs to the WASH1 family. As to quaternary structure, component of the WASH complex.

The protein resides in the early endosome membrane. Its subcellular location is the recycling endosome membrane. Functionally, acts as a nucleation-promoting factor at the surface of endosomes, where it recruits and activates the Arp2/3 complex to induce actin polymerization, playing a key role in the fission of tubules that serve as transport intermediates during endosome sorting. The protein is WASH complex subunit 1 of Xenopus laevis (African clawed frog).